Consider the following 745-residue polypeptide: Serine/threonine-protein kinase GG21441 (745 aa).

Positions 49-73 are disordered; it reads RNQQQNVQKDFDSHNRDCDSPVSST. Positions 57–67 are enriched in basic and acidic residues; it reads KDFDSHNRDCD. 2 Doublecortin domains span residues 159 to 245 and 315 to 398; these read LRIK…VEYN and RIVT…AEDF. Residues 479-737 enclose the Protein kinase domain; sequence YTLGRIIGDG…SEDILDHYWT (259 aa). Residues 485–493 and Lys508 each bind ATP; that span reads IGDGNFAIV. The Proton acceptor role is filled by Asp600.

Belongs to the protein kinase superfamily. CAMK Ser/Thr protein kinase family. CaMK subfamily.

It catalyses the reaction L-seryl-[protein] + ATP = O-phospho-L-seryl-[protein] + ADP + H(+). The enzyme catalyses L-threonyl-[protein] + ATP = O-phospho-L-threonyl-[protein] + ADP + H(+). This Drosophila erecta (Fruit fly) protein is Serine/threonine-protein kinase GG21441.